A 129-amino-acid polypeptide reads, in one-letter code: Small ribosomal subunit protein uS11 (129 aa).

It belongs to the universal ribosomal protein uS11 family. Part of the 30S ribosomal subunit. Interacts with proteins S7 and S18. Binds to IF-3.

Functionally, located on the platform of the 30S subunit, it bridges several disparate RNA helices of the 16S rRNA. Forms part of the Shine-Dalgarno cleft in the 70S ribosome. This chain is Small ribosomal subunit protein uS11, found in Haemophilus influenzae (strain 86-028NP).